A 441-amino-acid chain; its full sequence is Chitinase-like protein Idgf3 (441 aa).

A signal peptide spans 1-23 (MTGSLWLSLALSLAVLAQFKVSA). In terms of domain architecture, GH18 spans 25-441 (PNLVCFYDSQ…MLRAIKYRLL (417 aa)). An intrachain disulfide couples Cys-29 to Cys-56. Residue Asn-221 is glycosylated (N-linked (GlcNAc...) asparagine). The disordered stretch occupies residues 309–331 (SGDSGMPVVPSTQGPAPAGPQSK). An intrachain disulfide couples Cys-342 to Cys-425.

Belongs to the glycosyl hydrolase 18 family. IDGF subfamily. Glycosylated.

It localises to the secreted. Its function is as follows. Cooperates with insulin-like peptides to stimulate the proliferation, polarization and motility of imaginal disk cells. May act by stabilizing the binding of insulin-like peptides to its receptor through a simultaneous interaction with both molecules to form a multiprotein signaling complex. This chain is Chitinase-like protein Idgf3 (Idgf3), found in Drosophila yakuba (Fruit fly).